Here is a 511-residue protein sequence, read N- to C-terminus: MDIRPSEISKILKEQIKNFDQKAEVSEIGWVLSVGDGIARVYGLDNVQAGEMVSFSNGVRGMALNLEIDNVGVVIFGSDRDIREGDCVKRLGAIVEVPVGPALLGRVVDALGNPIDGKGPLKATEYRRVDVKAPGIIPRQSVHEPMSTGLKAIDALIPIGRGQRELVIGDRQTGKTAILLDAFLNQKPFHEKDAGNEKDKVYCIYVAIGQKRSTVAQFVKVLEERGALEYSIIVAATASDPAPMQFIAPLAGCAMGEYFRDNGQHALIGYDDLSKQAVAYRQMSLLLRRPPGREAYPGDVFYLHSRLLERAAKLNAENGSGSLTALPVIETQANDVSAYIPTNVISITDGQIFLETNLFYQGIRPAVNVGLSVSRVGSAAQIKAMKQVAGSIKGELAQYREMAAFAQFGSDLDASTQRLLNRGARLTELLKQPQFSPLKTEEQVVVIFAGVNGYLDALAVADVGRFEQGLLTLLRSDHSDLLQAIADQKQLTDDIKDKLIVVLNTYAKNFS.

Residue 169–176 (GDRQTGKT) coordinates ATP.

It belongs to the ATPase alpha/beta chains family. F-type ATPases have 2 components, CF(1) - the catalytic core - and CF(0) - the membrane proton channel. CF(1) has five subunits: alpha(3), beta(3), gamma(1), delta(1), epsilon(1). CF(0) has three main subunits: a(1), b(2) and c(9-12). The alpha and beta chains form an alternating ring which encloses part of the gamma chain. CF(1) is attached to CF(0) by a central stalk formed by the gamma and epsilon chains, while a peripheral stalk is formed by the delta and b chains.

It is found in the cell inner membrane. The enzyme catalyses ATP + H2O + 4 H(+)(in) = ADP + phosphate + 5 H(+)(out). In terms of biological role, produces ATP from ADP in the presence of a proton gradient across the membrane. The alpha chain is a regulatory subunit. This Bartonella henselae (strain ATCC 49882 / DSM 28221 / CCUG 30454 / Houston 1) (Rochalimaea henselae) protein is ATP synthase subunit alpha.